An 862-amino-acid chain; its full sequence is Probable alpha,alpha-trehalose-phosphate synthase [UDP-forming] 11 (862 aa).

Serine 5 carries the phosphoserine modification. The tract at residues 50–538 (PKRIVVSNQL…ARSYDQDLQR (489 aa)) is glycosyltransferase. Residues 838-862 (SKHEQQKKQSKFTFQQPMGQCRKKA) are disordered.

It in the N-terminal section; belongs to the glycosyltransferase 20 family. In the C-terminal section; belongs to the trehalose phosphatase family. As to expression, expressed in leaves, roots, stems and flowers.

It catalyses the reaction D-glucose 6-phosphate + UDP-alpha-D-glucose = alpha,alpha-trehalose 6-phosphate + UDP + H(+). The polypeptide is Probable alpha,alpha-trehalose-phosphate synthase [UDP-forming] 11 (TPS11) (Arabidopsis thaliana (Mouse-ear cress)).